The primary structure comprises 690 residues: Eukaryotic translation initiation factor 3 subunit B (690 aa).

Positions 1–11 are enriched in basic and acidic residues; that stretch reads MAKKKSEEHSG. The tract at residues 1–36 is disordered; sequence MAKKKSEEHSGADANDSDYTEEPNFDDPPNFVDNIS. Over residues 15–25 the composition is skewed to acidic residues; it reads NDSDYTEEPNF. The RRM domain maps to 57–141; that stretch reads SVVVVDNMPK…YTFAVNLFTD (85 aa). 5 WD repeats span residues 207-246, 292-331, 334-369, 442-484, and 530-575; these read TRER…KIQK, GDGM…LLDL, IKIP…TLME, EIRE…KPSL, and PDHF…IRRT. Residues 614 to 645 adopt a coiled-coil conformation; sequence QKDRLRLTRASKELLEKRSQLRETFMEYRNKR.

It belongs to the eIF-3 subunit B family. As to quaternary structure, component of the eukaryotic translation initiation factor 3 (eIF-3) complex. The eIF-3 complex interacts with pix. Interacts with mxt.

It is found in the cytoplasm. In terms of biological role, RNA-binding component of the eukaryotic translation initiation factor 3 (eIF-3) complex, which is involved in protein synthesis of a specialized repertoire of mRNAs and, together with other initiation factors, stimulates binding of mRNA and methionyl-tRNAi to the 40S ribosome. The eIF-3 complex specifically targets and initiates translation of a subset of mRNAs involved in cell proliferation. This is Eukaryotic translation initiation factor 3 subunit B from Drosophila virilis (Fruit fly).